Here is a 1282-residue protein sequence, read N- to C-terminus: MVAQEQLVLLLMLLAGCRGGANAILDPGWVIPSKVEQLIGGDFNLSCTLNEDYFNGKSAEDCPVEKLYFTGGGRVYRDSKHIRILNNTTILFSDTNAVEQENDYHCMCDEYVINKSKVYVGTRPLLVRDFNCLDYDFQFMVCNFTQPPNTVITKYNISYNTNNDWRYSNTLDCNFDSAPVVTCNLTDDNYKRFSETFYFRLSISNALGHETQPITINHFERLVPARPGQNLTLLNRTESSVCLSWEMPRRSNYNRGLVWQVRVTPQNFEPITRPSWRNHTLTIKDTLCLTELPFAGYNYTLRVRVRANQNNTLWSEPMIYAFATAPAPPRRPPRVTYGSFYVYSSEKAMRFYWEPLEEHELNGPDFRYSISEYRINGTAVDPGLIKVESNSAMIDHWSMSAVHHFLIRSSNSQGLSVNATPMTIGPISNRDFKVREPRNIRSVYHPTNKSYTLSWDPPSDQRELQNYTVFWCVPKPGLQSECEGSIRFAEVASGLHHFTTSPDQLLTLHMAVSANYQSHNTGLHWAICSSDKKDDLAKMEPSIDVATSTSLTVSWSERVCAVILAGYNLTYCQRSAGRPDNCTTVTIDRYTNKHVIQNLVPYTDYSVKMLMYSDSRVSKYSDELVNRTGEAAPSQPRELQLIRVTSDSVELAWKPPLLANGVVRAYEGTFRSLHDNVTDTFRVSASADELVNNEKPITYRLGNLTAFTKYEISVRARTVYPSEPSNVILFSTAIGVPSPPQLYVINNPDQSSRLDWEPPRTPAGRIDFYEISLRDNNASCLTSTILPGRNLSYVMATPRCTSHNPFQLAVRAINVEQHPQLNGADAAEGAVLLMSTNGKGCEARTDALGEEERLQFEAYAANMTAYRLYRSDWGIYGFICTPDTHSVKAMYQTIEVTVAILVLGVIFYLVYKKYRKMSDIGLVLPQGIMETMKKPIDMGGLGLGLGPDSSVSGGIVCTRVDDSPPYTPQDLPHDFSSCGSESSKLLLRTASSSGGGGCVDRDGYDDNHETGPISAVGPPTSYLAMRHGLLVQNDRERERERDREQEREREQQQQQRESEMDREQSCTNGYIKPTQMKSWGGNGPSDNDHTFSVPSTAMTAPMSQPLSQIPLSGYVPVPIPQSRFNPAPVQPFGSPAVPSAATAAAASTFFPPAHLLNMDNYVQASDLHKLKPLVAAPLSQTGGPAFAGSSPATSPPLQLPPVHAASPAAATPKMADIGYTTMEQLQLTGLIKPPLAATVGSPTHAAGGAPGGGNQHSRLQPQINGYVTPQDLNAMAHNRHVL.

The first 23 residues, 1–23 (MVAQEQLVLLLMLLAGCRGGANA), serve as a signal peptide directing secretion. The Extracellular portion of the chain corresponds to 24 to 889 (ILDPGWVIPS…CTPDTHSVKA (866 aa)). Residues asparagine 44, asparagine 86, asparagine 87, and asparagine 114 are each glycosylated (N-linked (GlcNAc...) asparagine). A disulfide bond links cysteine 47 and cysteine 106. 7 Fibronectin type-III domains span residues 124–220 (PLLV…NHFE), 227–327 (PGQN…TAPA), 329–431 (PRRP…SNRD), 436–535 (EPRN…KKDD), 537–631 (AKME…TGEA), 635–735 (QPRE…TAIG), and 736–836 (VPSP…LMST). A disulfide bridge connects residues cysteine 132 and cysteine 142. N-linked (GlcNAc...) asparagine glycosylation is found at asparagine 143 and asparagine 156. Cysteine 173 and cysteine 183 are disulfide-bonded. Residues asparagine 184, asparagine 230, asparagine 235, asparagine 278, asparagine 298, asparagine 310, asparagine 376, asparagine 448, and asparagine 466 are each glycosylated (N-linked (GlcNAc...) asparagine). A disulfide bridge links cysteine 472 with cysteine 482. Asparagine 568, asparagine 581, asparagine 626, asparagine 676, asparagine 703, asparagine 777, asparagine 790, and asparagine 862 each carry an N-linked (GlcNAc...) asparagine glycan. Residues 890-910 (MYQTIEVTVAILVLGVIFYLV) form a helical membrane-spanning segment. Over 911–1282 (YKKYRKMSDI…NAMAHNRHVL (372 aa)) the chain is Cytoplasmic. Serine 976 carries the phosphoserine modification. Disordered regions lie at residues 989 to 1092 (TASS…HTFS) and 1238 to 1258 (TVGS…QHSR). Basic and acidic residues-rich tracts occupy residues 999–1009 (VDRDGYDDNHE) and 1033–1064 (NDRE…DREQ).

The protein belongs to the type I cytokine receptor family. Interacts with wdp; the interaction promotes internalization of dome and its subsequent lysosomal degradation; thereby reducing JAK/STAT signaling. Post-translationally, undergoes lysosomal degradation. In terms of tissue distribution, in stage 11 embryos, tracheal pits show highest expression, at stage 14 high expression is detected in the posterior spiracles, gut and head.

It localises to the apicolateral cell membrane. Critical for epithelial morphogenesis during oogenesis; border cell migration. Required in the germarium for the polarization of follicle cells during encapsulation of germline cells. Required for embryonic segmentation and trachea specification. Essential receptor molecule for upd and JAK/STAT signaling during oogenesis. This Drosophila melanogaster (Fruit fly) protein is Cytokine receptor (dome).